The following is an 886-amino-acid chain: General transcription factor 3C polypeptide 3 (886 aa).

The interval 1–121 is disordered; it reads MSGFSPELID…TPEQPTAGDV (121 aa). At Ser-2 the chain carries N-acetylserine. Residues 12–44 show a composition bias toward basic and acidic residues; it reads LEGKISFEEFERRREERKTREKKSLQEKGKLSA. Ser-43 is subject to Phosphoserine. Residues 53–63 show a composition bias toward polar residues; that stretch reads VPSSSGINSTK. The segment covering 92 to 113 has biased composition (acidic residues); it reads ENEDDEEEEEEEEEEEEEEETP. TPR repeat units lie at residues 149 to 182, 183 to 216, 217 to 250, 252 to 284, 290 to 323, 326 to 361, 421 to 454, 456 to 489, 491 to 523, 733 to 766, and 811 to 844; these read LRGLMGEANIRFARGEREEAILMCMEIIRQAPLA, YEPFSTLAMIYEDQGDMEKSLQFELIAAHLNPSD, TEEWVRLAEMSLEQDNIKQAIFCYTKALKYEPTN, RYLWERSSLYEQMGDHKMAMDGYRRILNLLSPS, MQLARDMAKSYYEANDVTSAINIIDEAFSKHQGL, MEDVNIAAELYISNKQYDKALEIITDFSGIVLEKKT, GDLYLDVAEAFLDVGEYNSALPLLSALVCSERYN, AVVWLRHAECLKALGYMERAAESYGKVVDLAPLH, DARISLSTLQQQLGQPEKALEALEPMYDPDTLA, HALCVLNGHNAFVSGSFKHALGQYVQAFRTHPDE, and QESFYNLGRGLHQLGLIHLAIHYYQKALELPPLV. Position 282 is a phosphoserine (Ser-282).

Part of the TFIIIC subcomplex TFIIIC2, consisting of six subunits, GTF3C1, GTF3C2, GTF3C3, GTF3C4, GTF3C5 and GTF3C6. Interacts with BRF1 and TBP.

Its subcellular location is the nucleus. Functionally, involved in RNA polymerase III-mediated transcription. Integral, tightly associated component of the DNA-binding TFIIIC2 subcomplex that directly binds tRNA and virus-associated RNA promoters. The protein is General transcription factor 3C polypeptide 3 (GTF3C3) of Homo sapiens (Human).